The primary structure comprises 320 residues: o-succinylbenzoate synthase (320 aa).

The Proton donor role is filled by Lys-133. Mg(2+)-binding residues include Asp-161, Glu-190, and Asp-213. Lys-235 functions as the Proton acceptor in the catalytic mechanism.

It belongs to the mandelate racemase/muconate lactonizing enzyme family. MenC type 1 subfamily. A divalent metal cation is required as a cofactor.

It carries out the reaction (1R,6R)-6-hydroxy-2-succinyl-cyclohexa-2,4-diene-1-carboxylate = 2-succinylbenzoate + H2O. It participates in quinol/quinone metabolism; 1,4-dihydroxy-2-naphthoate biosynthesis; 1,4-dihydroxy-2-naphthoate from chorismate: step 4/7. It functions in the pathway quinol/quinone metabolism; menaquinone biosynthesis. Its function is as follows. Converts 2-succinyl-6-hydroxy-2,4-cyclohexadiene-1-carboxylate (SHCHC) to 2-succinylbenzoate (OSB). This Citrobacter koseri (strain ATCC BAA-895 / CDC 4225-83 / SGSC4696) protein is o-succinylbenzoate synthase.